Here is a 182-residue protein sequence, read N- to C-terminus: Putative adenylate kinase (182 aa).

The ATP site is built by glycine 10, glycine 12, lysine 13, threonine 14, and serine 15. Positions 30 to 53 (HLNEMIKEEHLYTEVDEVRDAVIA) are NMP. Residues 104-114 (ARGYSEEKIRE) are LID. Arginine 105 and lysine 143 together coordinate ATP.

Belongs to the adenylate kinase family. AK6 subfamily. In terms of assembly, interacts with uS11. Not a structural component of 40S pre-ribosomes, but transiently interacts with them by binding to uS11.

It catalyses the reaction AMP + ATP = 2 ADP. It carries out the reaction ATP + H2O = ADP + phosphate + H(+). In terms of biological role, broad-specificity nucleoside monophosphate (NMP) kinase that catalyzes the reversible transfer of the terminal phosphate group between nucleoside triphosphates and monophosphates. Also has ATPase activity. Involved in the late maturation steps of the 30S ribosomal particles, specifically 16S rRNA maturation. While NMP activity is not required for ribosome maturation, ATPase activity is. Associates transiently with small ribosomal subunit protein uS11. ATP hydrolysis breaks the interaction with uS11. May temporarily remove uS11 from the ribosome to enable a conformational change of the ribosomal RNA that is needed for the final maturation step of the small ribosomal subunit. The polypeptide is Putative adenylate kinase (Methanosarcina barkeri (strain Fusaro / DSM 804)).